The sequence spans 141 residues: Hemoglobin subunit alpha (141 aa).

The Globin domain maps to V1 to R141. Residue S3 is modified to Phosphoserine. N6-succinyllysine is present on residues K7 and K11. Position 16 is an N6-acetyllysine; alternate (K16). K16 carries the post-translational modification N6-succinyllysine; alternate. The residue at position 24 (Y24) is a Phosphotyrosine. Position 35 is a phosphoserine (S35). The residue at position 40 (K40) is an N6-succinyllysine. The residue at position 49 (S49) is a Phosphoserine. H58 lines the O2 pocket. H87 lines the heme b pocket. Residue S102 is modified to Phosphoserine. Position 108 is a phosphothreonine (T108). Residues S124 and S131 each carry the phosphoserine modification. A phosphothreonine mark is found at T134 and T137. Phosphoserine is present on S138.

The protein belongs to the globin family. As to quaternary structure, heterotetramer of two alpha chains and two beta chains. As to expression, red blood cells.

Involved in oxygen transport from the lung to the various peripheral tissues. This is Hemoglobin subunit alpha from Peromyscus crinitus (Canyon mouse).